Here is a 492-residue protein sequence, read N- to C-terminus: MAKMPETTFADLSLADKTAVKKSSIEARRFSDVSTCSFSSTCFTGSSDEEDVSPKDNHQRNSAGGTDFCVKSISKSAFGRREIEIAESEMPGIMTLRKRAKDEKPLKGANIVGCTHVNAQSAVLIETLVQLGATVRWAACNIYSTQNAVAAALAEAGIPIFAWRGETEEEFWWCLDRAIYSDGWQPNLILDDGGDATHLMLKKYPDYFKAIRGIVEESVTGVHRLYMLSKGGKLTVPAINVNDSVTKNKFDTFYTCRDSILDSLKRTTDIMFGGKQVVICGYGDVGKGCAQSLKGQGCIVYVTEVDPICALQAAMDGFRVVRLNEVIRTVDVVVTATGNKNVITRDHMNRMKNGCILCNMGHSCSEIDVNGLHTPELTWERVRSQVDHIRWPDGRMIILLAEGRLVNLSCSTISSFVVSVASSTQALALIELFSAPGRYKSDVYLLPKKMDEYVASLHLATFDAHLTELTDEQSKFMGLNKAGPFKANYYRY.

Positions Phe43–Gly64 are disordered. Residues Asp192 and Glu217 each coordinate substrate. Residue Ser218–Thr220 coordinates NAD(+). Substrate contacts are provided by Lys247 and Asp251. NAD(+) is bound by residues Gly283 to Gly288, Glu304, Met360 to His362, Asn407, Lys486, Lys486 to Tyr490, and Tyr490.

It belongs to the adenosylhomocysteinase family. It depends on NAD(+) as a cofactor.

In terms of biological role, might play a role in the regulation of methionine metabolism. The chain is Adenosylhomocysteinase-like 2 from Drosophila melanogaster (Fruit fly).